Consider the following 622-residue polypeptide: MALLQISEPGQSPDPHQRRVAIGIDLGTTHSLVAAVRNGVAECLPDAQGRVLLPSVVRYLGGGGRQIGYEAAAAQMQDPANTVSSVKRFMGRGLGDITGREKLPYNFIAATDSGGMLSLSTAAGVKSPVEVSAEILATLRYRAEDSFDSDLYGAVITVPAYFDDAQRQATKDAAHLAGLNLLRLINEPTAAAIAYGLDNGAEGVYAVYDLGGGTFDISVLRLAQGVFEVIATGGDSALGGDDYDAALAEWVMQQTGVRASTPEDKTAVRLAARACKEALTATDNVAFTADVAGATVQFDVKREDFAAVTADLTQRSLAAVRRTLRDAQIERDEVKGVVLVGGSTRMPVVRTAVAEFFGREPLTNLNPDEVVAIGAAIQANQLAGNDAAGDLLLLDVIPLSLGIETMGGLVERIIGRNETIPTAKAQDFTTYKDGQTALAIHVVQGERDLVQDCRSLARFELRGIPPMAAGAARIRVTFTVDADGLLSVAAREQASGVEARIDVKPSYGLTDEQIARMLQEGFATAQQDMQTRALVEARVDADRLLIATQSALDVDGDVLTAAERTAIDDLMHALRATLETSTDAAAVEAAAQALAKGTEAFAAQRMNRGIRQALAGKNVSAL.

It belongs to the heat shock protein 70 family.

Functionally, chaperone involved in the maturation of iron-sulfur cluster-containing proteins. Has a low intrinsic ATPase activity which is markedly stimulated by HscB. This Acidovorax sp. (strain JS42) protein is Chaperone protein HscA homolog.